The primary structure comprises 619 residues: Chaperone protein HscA homolog (619 aa).

This sequence belongs to the heat shock protein 70 family.

Functionally, chaperone involved in the maturation of iron-sulfur cluster-containing proteins. Has a low intrinsic ATPase activity which is markedly stimulated by HscB. This chain is Chaperone protein HscA homolog, found in Acinetobacter baumannii (strain AB0057).